The following is a 295-amino-acid chain: MSVITQAQEIPTVAANPDFNYEGDPIIIQLCDRDTVFELSRDQLLGLPESILMCLFPRGLLLDYEIQECQLTQRPLIFQTADFDPSLLQYILNYFQMAENRTANDEIALSPPPPSFPGKCGIILLKEDIEFFILPPISPTTNIAIEVSPNDLLKLKQRVAQRLLQQKKIFDCLHLENSTSEGSAEKNLVRMLCYSGFHEDDEWKRRIQEPHRACITSVTLTNLDFSADQGPVSDPEYFPVYHKLLLFWQKPARKCWWDSSTSITYNGIEFATWVRRVWTLELAVLGANTYETAAV.

Belongs to the WHI2 family.

The protein localises to the cytoplasm. It is found in the nucleus. The chain is WHI2-like protein P4H10.16c from Schizosaccharomyces pombe (strain 972 / ATCC 24843) (Fission yeast).